The primary structure comprises 273 residues: Putative ABC transporter ATP-binding protein DVU_1056 (273 aa).

Residues 10 to 242 (LSLDDIHFTY…IHHGGEVAHE (233 aa)) enclose the ABC transporter domain. 44–51 (GHNGSGKT) contacts ATP. The tract at residues 234–273 (HHGGEVAHEHPSRGCCHQHDGSHHHAGHDDDHPHTSQTTE) is disordered. Over residues 235 to 267 (HGGEVAHEHPSRGCCHQHDGSHHHAGHDDDHPH) the composition is skewed to basic and acidic residues.

This sequence belongs to the ABC transporter superfamily.

It localises to the cell inner membrane. Functionally, probably part of an ABC transporter complex. Responsible for energy coupling to the transport system. This chain is Putative ABC transporter ATP-binding protein DVU_1056, found in Nitratidesulfovibrio vulgaris (strain ATCC 29579 / DSM 644 / CCUG 34227 / NCIMB 8303 / VKM B-1760 / Hildenborough) (Desulfovibrio vulgaris).